We begin with the raw amino-acid sequence, 363 residues long: NAD(P)H-quinone oxidoreductase subunit 1, chloroplastic (363 aa).

9 helical membrane-spanning segments follow: residues 30–50 (LVPI…IVWL), 98–118 (FSIG…VIPF), 129–149 (IGVF…LMSG), 165–185 (AAQS…ISLL), 203–223 (LWGW…ISSL), 248–268 (YSGI…LVSS), 269–289 (LFVT…IFVP), 300–320 (VFGT…FLFI), and 334–354 (DQLL…NLLL).

Belongs to the complex I subunit 1 family. As to quaternary structure, NDH is composed of at least 16 different subunits, 5 of which are encoded in the nucleus.

It localises to the plastid. Its subcellular location is the chloroplast thylakoid membrane. The catalysed reaction is a plastoquinone + NADH + (n+1) H(+)(in) = a plastoquinol + NAD(+) + n H(+)(out). The enzyme catalyses a plastoquinone + NADPH + (n+1) H(+)(in) = a plastoquinol + NADP(+) + n H(+)(out). Functionally, NDH shuttles electrons from NAD(P)H:plastoquinone, via FMN and iron-sulfur (Fe-S) centers, to quinones in the photosynthetic chain and possibly in a chloroplast respiratory chain. The immediate electron acceptor for the enzyme in this species is believed to be plastoquinone. Couples the redox reaction to proton translocation, and thus conserves the redox energy in a proton gradient. This is NAD(P)H-quinone oxidoreductase subunit 1, chloroplastic from Oenothera elata subsp. hookeri (Hooker's evening primrose).